The following is a 56-amino-acid chain: Ovomucoid (56 aa).

The Kazal-like domain occupies 6-56 (VDCSEYPKPDCTTEERPLCGSDNKTYGNKCNFCNAVVESNGTLTLSHFGKC). 3 disulfide bridges follow: C8-C38, C16-C35, and C24-C56. The N-linked (GlcNAc...) asparagine glycan is linked to N45.

It localises to the secreted. The protein is Ovomucoid of Francolinus pondicerianus (Grey francolin).